Here is a 111-residue protein sequence, read N- to C-terminus: Thiosulfate sulfurtransferase GlpE (111 aa).

One can recognise a Rhodanese domain in the interval 16-104 (QTENAVLLDV…WQRAGLPMET (89 aa)). The active-site Cysteine persulfide intermediate is Cys64.

The protein belongs to the GlpE family.

It localises to the cytoplasm. It catalyses the reaction thiosulfate + hydrogen cyanide = thiocyanate + sulfite + 2 H(+). The catalysed reaction is thiosulfate + [thioredoxin]-dithiol = [thioredoxin]-disulfide + hydrogen sulfide + sulfite + 2 H(+). Its function is as follows. Transferase that catalyzes the transfer of sulfur from thiosulfate to thiophilic acceptors such as cyanide or dithiols. May function in a CysM-independent thiosulfate assimilation pathway by catalyzing the conversion of thiosulfate to sulfite, which can then be used for L-cysteine biosynthesis. This Actinobacillus succinogenes (strain ATCC 55618 / DSM 22257 / CCUG 43843 / 130Z) protein is Thiosulfate sulfurtransferase GlpE.